The primary structure comprises 551 residues: Cytosolic Fe-S cluster assembly factor NAR1 (551 aa).

Residues cysteine 20, cysteine 57, cysteine 60, cysteine 63, cysteine 178, and cysteine 242 each coordinate [4Fe-4S] cluster. The tract at residues 395–435 (DPSGHKKRSVRRVAALRSRGRKDSSSEDSTGTPSAISNALG) is disordered. Polar residues predominate over residues 421 to 431 (EDSTGTPSAIS). Cysteine 451 is a binding site for [4Fe-4S] cluster.

The protein belongs to the NARF family.

Functionally, component of the cytosolic Fe/S protein assembly machinery. Required for maturation of extramitochondrial Fe/S proteins. May play a role in the transfer of pre-assembled Fe/S clusters to target apoproteins. The protein is Cytosolic Fe-S cluster assembly factor NAR1 (NAR1) of Candida glabrata (strain ATCC 2001 / BCRC 20586 / JCM 3761 / NBRC 0622 / NRRL Y-65 / CBS 138) (Yeast).